We begin with the raw amino-acid sequence, 118 residues long: Large ribosomal subunit protein bL20 (118 aa).

It belongs to the bacterial ribosomal protein bL20 family.

Binds directly to 23S ribosomal RNA and is necessary for the in vitro assembly process of the 50S ribosomal subunit. It is not involved in the protein synthesizing functions of that subunit. In Sulfurihydrogenibium sp. (strain YO3AOP1), this protein is Large ribosomal subunit protein bL20.